Reading from the N-terminus, the 445-residue chain is Methylenetetrahydrofolate--tRNA-(uracil-5-)-methyltransferase TrmFO (445 aa).

An FAD-binding site is contributed by 9–14 (GGGLAG).

It belongs to the MnmG family. TrmFO subfamily. FAD is required as a cofactor.

Its subcellular location is the cytoplasm. The enzyme catalyses uridine(54) in tRNA + (6R)-5,10-methylene-5,6,7,8-tetrahydrofolate + NADH + H(+) = 5-methyluridine(54) in tRNA + (6S)-5,6,7,8-tetrahydrofolate + NAD(+). It carries out the reaction uridine(54) in tRNA + (6R)-5,10-methylene-5,6,7,8-tetrahydrofolate + NADPH + H(+) = 5-methyluridine(54) in tRNA + (6S)-5,6,7,8-tetrahydrofolate + NADP(+). Functionally, catalyzes the folate-dependent formation of 5-methyl-uridine at position 54 (M-5-U54) in all tRNAs. This chain is Methylenetetrahydrofolate--tRNA-(uracil-5-)-methyltransferase TrmFO, found in Solibacter usitatus (strain Ellin6076).